Consider the following 501-residue polypeptide: MAVVPGGPSSRPAVGAQFFCTAGRGLEPFLMREVRERLAATQVEYISGKVFFTTCSDLNMLKQLKSAERLFLLIKKQLPFPVSSVSKGKILNELQRLINDDPESWLNAISIWKNLLELDAKKEKLSHKNANPLKRKVGEDDITAKKLKTEQIQELQETKECQLEKQIEEKILEQGNFITEGEKFQKLQDDVTEAVDTRNQTNLTFRVSCRCSGAVAKTLTAQEVGRVIGIALMKQFGWKADLRNPNLEIFIHLSDVYSVLGIPVFRVPLACRAYIKTAGLRSTIAWAMASLAEIKAGAVVLDPMCGLGTILLEAAKEWPHVYYVGADVSDSQLSGAYDNLRAAGLRDKIELLQVSVIELPLPSESVDIIISDIPFGKKFKLGKDIKRMLQEMERVLRVGGTIVLLLSEDHHRHLKGGEASSGPLNSQGGHTEEPGGEERLTPAEKAAVSEPVSSPFAASNQGRLDRMPPLGSLVPVDCYRVSLGKTDALISKYKKSHSPGR.

In terms of domain architecture, THUMP spans 149–264; sequence TEQIQELQET…DVYSVLGIPV (116 aa). Residues 414–469 are disordered; sequence LKGGEASSGPLNSQGGHTEEPGGEERLTPAEKAAVSEPVSSPFAASNQGRLDRMPP. Basic and acidic residues predominate over residues 430 to 442; that stretch reads HTEEPGGEERLTP.

It belongs to the methyltransferase superfamily. In terms of assembly, part of the heterodimeric THUMPD2-TRM112 methyltransferase complex; this complex forms an active tRNA methyltransferase, where TRMT112 acts as an activator of the catalytic subunit THUMPD2.

The protein localises to the nucleus. The catalysed reaction is guanosine in U6 snRNA + S-adenosyl-L-methionine = N(2)-methylguanosine in U6 snRNA + S-adenosyl-L-homocysteine + H(+). Its function is as follows. Catalytic subunit of the THUMPD2-TRM112 methyltransferase complex, that specifically mediates the S-adenosyl-L-methionine-dependent N(2)-methylation of guanosine nucleotides, most probably at position 72 (m2G72), in the U6snRNA of the major spliceosome. This modification in the U6 snRNA affects the constitutive splicing efficiency of introns that have suboptimal splice sites and can impact final mRNA levels. The sequence is that of U6 snRNA (guanine-N(2))-methyltransferase THUMPD2 from Bos taurus (Bovine).